The sequence spans 412 residues: Multifunctional CCA protein (412 aa).

The ATP site is built by G8 and R11. CTP is bound by residues G8 and R11. Mg(2+) is bound by residues E21 and D23. ATP-binding residues include R91, R137, and R140. Residues R91, R137, and R140 each contribute to the CTP site. One can recognise an HD domain in the interval 228–329; the sequence is TGIHTLMTLA…LKLFNAIDVW (102 aa).

The protein belongs to the tRNA nucleotidyltransferase/poly(A) polymerase family. Bacterial CCA-adding enzyme type 1 subfamily. In terms of assembly, monomer. Can also form homodimers and oligomers. Mg(2+) serves as cofactor. It depends on Ni(2+) as a cofactor.

It carries out the reaction a tRNA precursor + 2 CTP + ATP = a tRNA with a 3' CCA end + 3 diphosphate. The enzyme catalyses a tRNA with a 3' CCA end + 2 CTP + ATP = a tRNA with a 3' CCACCA end + 3 diphosphate. Its function is as follows. Catalyzes the addition and repair of the essential 3'-terminal CCA sequence in tRNAs without using a nucleic acid template. Adds these three nucleotides in the order of C, C, and A to the tRNA nucleotide-73, using CTP and ATP as substrates and producing inorganic pyrophosphate. tRNA 3'-terminal CCA addition is required both for tRNA processing and repair. Also involved in tRNA surveillance by mediating tandem CCA addition to generate a CCACCA at the 3' terminus of unstable tRNAs. While stable tRNAs receive only 3'-terminal CCA, unstable tRNAs are marked with CCACCA and rapidly degraded. This Yersinia pestis protein is Multifunctional CCA protein.